Consider the following 1242-residue polypeptide: ATP-dependent helicase/nuclease subunit A (1242 aa).

Positions 12 to 487 (SRWTDEQWKA…IDLASNFRSR (476 aa)) constitute a UvrD-like helicase ATP-binding domain. Position 33 to 40 (33 to 40 (AAAGSGKT)) interacts with ATP. The UvrD-like helicase C-terminal domain occupies 514–808 (AAQLKYGADY…RVMTIHSSKG (295 aa)).

The protein belongs to the helicase family. AddA subfamily. In terms of assembly, heterodimer of AddA and AddB/RexB. Mg(2+) serves as cofactor.

It catalyses the reaction Couples ATP hydrolysis with the unwinding of duplex DNA by translocating in the 3'-5' direction.. The enzyme catalyses ATP + H2O = ADP + phosphate + H(+). Functionally, the heterodimer acts as both an ATP-dependent DNA helicase and an ATP-dependent, dual-direction single-stranded exonuclease. Recognizes the chi site generating a DNA molecule suitable for the initiation of homologous recombination. The AddA nuclease domain is required for chi fragment generation; this subunit has the helicase and 3' -&gt; 5' nuclease activities. This is ATP-dependent helicase/nuclease subunit A from Geobacillus thermodenitrificans (strain NG80-2).